Reading from the N-terminus, the 981-residue chain is Helicase-like transcription factor CHR28 (981 aa).

Disordered regions lie at residues 1 to 66 (MDSA…LDSR) and 112 to 194 (KRTH…RNSE). Polar residues predominate over residues 46-65 (SGSSSGANGHTKTGLTNLDS). Residues 119 to 128 (FSRPPFPPRP) show a composition bias toward pro residues. Residues 166-176 (HGTSASPSHFN) are compositionally biased toward polar residues. The segment covering 181–194 (PMHRNGIGEERNSE) has biased composition (basic and acidic residues). The Helicase ATP-binding domain maps to 241 to 526 (ETNSLHCMGG…YSYFRFLKYD (286 aa)). 254–261 (DDQGLGKT) provides a ligand contact to ATP. 2 disordered regions span residues 293 to 337 (DADD…RKFN) and 439 to 462 (VVGT…SDPD). The span at 439–451 (VVGTTKKSKKKKG) shows a compositional bias: basic residues. The segment at 679–718 (CCVCHDPPEDPVVTLCGHIFCYQCVSDYITGDEDTCPAPR) adopts an RING-type; degenerate zinc-finger fold. Polar residues predominate over residues 779–798 (NQGTSNSTQNGQMASSSQQP). The tract at residues 779 to 808 (NQGTSNSTQNGQMASSSQQPNDDDDDDDDD) is disordered. The segment covering 799-808 (NDDDDDDDDD) has biased composition (acidic residues). Residues 804-976 (DDDDDVTIVE…ATRLTVDDLK (173 aa)) enclose the Helicase C-terminal domain.

It belongs to the SNF2/RAD54 helicase family. RAD16 subfamily. Interacts with SUVR2.

The protein localises to the nucleus. Its function is as follows. Probable helicase-like transcription factor involved in transcriptional gene silencing. Associates with SUVR2 and contributes to transcriptional gene silencing at RNA-directed DNA methylation (RdDM) target loci but also at RdDM-independent target loci. May be involved in nucleosome positioning to form ordered nucleosome arrays on chromatin. Associates with SUVR2 and functions redundantly with FRG1. Required for the efficient methylation of a broad range of RdDM target loci. This is Helicase-like transcription factor CHR28 from Arabidopsis thaliana (Mouse-ear cress).